The chain runs to 181 residues: Large ribosomal subunit protein uL5 (181 aa).

This sequence belongs to the universal ribosomal protein uL5 family. Part of the 50S ribosomal subunit; part of the 5S rRNA/L5/L18/L25 subcomplex. Contacts the 5S rRNA and the P site tRNA. Forms a bridge to the 30S subunit in the 70S ribosome.

This is one of the proteins that bind and probably mediate the attachment of the 5S RNA into the large ribosomal subunit, where it forms part of the central protuberance. In the 70S ribosome it contacts protein S13 of the 30S subunit (bridge B1b), connecting the 2 subunits; this bridge is implicated in subunit movement. Contacts the P site tRNA; the 5S rRNA and some of its associated proteins might help stabilize positioning of ribosome-bound tRNAs. The chain is Large ribosomal subunit protein uL5 from Helicobacter pylori (strain P12).